Reading from the N-terminus, the 324-residue chain is Acetyl-coenzyme A carboxylase carboxyl transferase subunit alpha (324 aa).

A CoA carboxyltransferase C-terminal domain is found at 37–291; sequence KLERRLDKLK…RDFILREWLR (255 aa).

It belongs to the AccA family. In terms of assembly, acetyl-CoA carboxylase is a heterohexamer composed of biotin carboxyl carrier protein (AccB), biotin carboxylase (AccC) and two subunits each of ACCase subunit alpha (AccA) and ACCase subunit beta (AccD).

The protein localises to the cytoplasm. It catalyses the reaction N(6)-carboxybiotinyl-L-lysyl-[protein] + acetyl-CoA = N(6)-biotinyl-L-lysyl-[protein] + malonyl-CoA. It functions in the pathway lipid metabolism; malonyl-CoA biosynthesis; malonyl-CoA from acetyl-CoA: step 1/1. Functionally, component of the acetyl coenzyme A carboxylase (ACC) complex. First, biotin carboxylase catalyzes the carboxylation of biotin on its carrier protein (BCCP) and then the CO(2) group is transferred by the carboxyltransferase to acetyl-CoA to form malonyl-CoA. This Chlamydia abortus (strain DSM 27085 / S26/3) (Chlamydophila abortus) protein is Acetyl-coenzyme A carboxylase carboxyl transferase subunit alpha.